Here is a 393-residue protein sequence, read N- to C-terminus: Chalcone synthase DII (393 aa).

Cysteine 164 is a catalytic residue.

This sequence belongs to the thiolase-like superfamily. Chalcone/stilbene synthases family.

The enzyme catalyses (E)-4-coumaroyl-CoA + 3 malonyl-CoA + 3 H(+) = 2',4,4',6'-tetrahydroxychalcone + 3 CO2 + 4 CoA. It functions in the pathway secondary metabolite biosynthesis; flavonoid biosynthesis. Its function is as follows. The primary product of this enzyme is 4,2',4',6'-tetrahydroxychalcone (also termed naringenin-chalcone or chalcone) which can under specific conditions spontaneously isomerize into naringenin. The sequence is that of Chalcone synthase DII (CHS-DII) from Ipomoea batatas (Sweet potato).